Consider the following 438-residue polypeptide: UDP-N-acetylmuramoylalanine--D-glutamate ligase (438 aa).

Position 112–118 (112–118 (GSNGKST)) interacts with ATP.

The protein belongs to the MurCDEF family.

The protein localises to the cytoplasm. The catalysed reaction is UDP-N-acetyl-alpha-D-muramoyl-L-alanine + D-glutamate + ATP = UDP-N-acetyl-alpha-D-muramoyl-L-alanyl-D-glutamate + ADP + phosphate + H(+). Its pathway is cell wall biogenesis; peptidoglycan biosynthesis. In terms of biological role, cell wall formation. Catalyzes the addition of glutamate to the nucleotide precursor UDP-N-acetylmuramoyl-L-alanine (UMA). In Shigella sonnei (strain Ss046), this protein is UDP-N-acetylmuramoylalanine--D-glutamate ligase.